Here is a 433-residue protein sequence, read N- to C-terminus: 23S rRNA (uracil(1939)-C(5))-methyltransferase RlmD (433 aa).

Residues 10–68 enclose the TRAM domain; that stretch reads RTTTRQIITVSVNDLDSFGQGVARHNGKTLFIPGLLPQENAEVTVTEDKKQYARAKVVR. C81, C87, C90, and C162 together coordinate [4Fe-4S] cluster. Residues Q265, F294, N299, E315, N342, and D363 each coordinate S-adenosyl-L-methionine. C389 functions as the Nucleophile in the catalytic mechanism.

Belongs to the class I-like SAM-binding methyltransferase superfamily. RNA M5U methyltransferase family. RlmD subfamily.

It carries out the reaction uridine(1939) in 23S rRNA + S-adenosyl-L-methionine = 5-methyluridine(1939) in 23S rRNA + S-adenosyl-L-homocysteine + H(+). In terms of biological role, catalyzes the formation of 5-methyl-uridine at position 1939 (m5U1939) in 23S rRNA. In Shigella sonnei (strain Ss046), this protein is 23S rRNA (uracil(1939)-C(5))-methyltransferase RlmD.